Reading from the N-terminus, the 913-residue chain is DNA mismatch repair protein MutS (913 aa).

A disordered region spans residues 18–50 (NNKQKEKTKIPEDLSLEDLKKESQKRPRQRKNS). Residues 19–42 (NKQKEKTKIPEDLSLEDLKKESQK) are compositionally biased toward basic and acidic residues. ATP is bound at residue 720–727 (GPNASGKS).

This sequence belongs to the DNA mismatch repair MutS family.

In terms of biological role, this protein is involved in the repair of mismatches in DNA. It is possible that it carries out the mismatch recognition step. This protein has a weak ATPase activity. In Prochlorococcus marinus (strain MIT 9301), this protein is DNA mismatch repair protein MutS.